Here is a 482-residue protein sequence, read N- to C-terminus: F-box/LRR-repeat protein At3g58930 (482 aa).

The 47-residue stretch at 1–47 (MDRVSNLPDGVRGHILSFLPAKHIALTSVLSKSWLNLWKLIPILDID) folds into the F-box domain. LRR repeat units follow at residues 122–150 (SYED…KIRN), 175–200 (SDLI…RMAS), 222–248 (GTGC…NYSD), 313–344 (ILYL…GIKS), and 345–370 (EEGR…IIEG).

The chain is F-box/LRR-repeat protein At3g58930 from Arabidopsis thaliana (Mouse-ear cress).